Here is a 351-residue protein sequence, read N- to C-terminus: Nicotinate-nucleotide--dimethylbenzimidazole phosphoribosyltransferase (351 aa).

Residue E317 is the Proton acceptor of the active site.

This sequence belongs to the CobT family.

The enzyme catalyses 5,6-dimethylbenzimidazole + nicotinate beta-D-ribonucleotide = alpha-ribazole 5'-phosphate + nicotinate + H(+). Its pathway is nucleoside biosynthesis; alpha-ribazole biosynthesis; alpha-ribazole from 5,6-dimethylbenzimidazole: step 1/2. In terms of biological role, catalyzes the synthesis of alpha-ribazole-5'-phosphate from nicotinate mononucleotide (NAMN) and 5,6-dimethylbenzimidazole (DMB). This is Nicotinate-nucleotide--dimethylbenzimidazole phosphoribosyltransferase from Bradyrhizobium sp. (strain BTAi1 / ATCC BAA-1182).